The primary structure comprises 219 residues: Protein-L-isoaspartate O-methyltransferase (219 aa).

Residue S66 is part of the active site.

Belongs to the methyltransferase superfamily. L-isoaspartyl/D-aspartyl protein methyltransferase family.

It localises to the cytoplasm. It catalyses the reaction [protein]-L-isoaspartate + S-adenosyl-L-methionine = [protein]-L-isoaspartate alpha-methyl ester + S-adenosyl-L-homocysteine. In terms of biological role, catalyzes the methyl esterification of L-isoaspartyl residues in peptides and proteins that result from spontaneous decomposition of normal L-aspartyl and L-asparaginyl residues. It plays a role in the repair and/or degradation of damaged proteins. The chain is Protein-L-isoaspartate O-methyltransferase from Xanthobacter autotrophicus (strain ATCC BAA-1158 / Py2).